The primary structure comprises 171 residues: Co-chaperone protein HscB homolog (171 aa).

A J domain is found at 2 to 74; that stretch reads NYFELFGLPI…LRRAEYLLSL (73 aa).

It belongs to the HscB family. In terms of assembly, interacts with HscA and stimulates its ATPase activity.

In terms of biological role, co-chaperone involved in the maturation of iron-sulfur cluster-containing proteins. Seems to help targeting proteins to be folded toward HscA. This chain is Co-chaperone protein HscB homolog, found in Vibrio cholerae serotype O1 (strain M66-2).